The chain runs to 706 residues: Elongation factor G (706 aa).

The region spanning 8-297 (SYVRNIGIGA…AVVDYLPSPN (290 aa)) is the tr-type G domain. Residues 17–24 (AHIDAGKT), 95–99 (DTPGH), and 149–152 (NKMD) contribute to the GTP site.

The protein belongs to the TRAFAC class translation factor GTPase superfamily. Classic translation factor GTPase family. EF-G/EF-2 subfamily.

It is found in the cytoplasm. Functionally, catalyzes the GTP-dependent ribosomal translocation step during translation elongation. During this step, the ribosome changes from the pre-translocational (PRE) to the post-translocational (POST) state as the newly formed A-site-bound peptidyl-tRNA and P-site-bound deacylated tRNA move to the P and E sites, respectively. Catalyzes the coordinated movement of the two tRNA molecules, the mRNA and conformational changes in the ribosome. The polypeptide is Elongation factor G (Orientia tsutsugamushi (strain Boryong) (Rickettsia tsutsugamushi)).